We begin with the raw amino-acid sequence, 372 residues long: tRNA-specific 2-thiouridylase MnmA (372 aa).

ATP is bound by residues 7–14 (GLSGGVDS) and M33. Residues 104–106 (NPD) are interaction with target base in tRNA. The active-site Nucleophile is the C109. A disulfide bond links C109 and C202. G134 contributes to the ATP binding site. The tract at residues 152–154 (KDQ) is interaction with tRNA. C202 serves as the catalytic Cysteine persulfide intermediate. An interaction with tRNA region spans residues 310–311 (RY).

The protein belongs to the MnmA/TRMU family.

It is found in the cytoplasm. It carries out the reaction S-sulfanyl-L-cysteinyl-[protein] + uridine(34) in tRNA + AH2 + ATP = 2-thiouridine(34) in tRNA + L-cysteinyl-[protein] + A + AMP + diphosphate + H(+). In terms of biological role, catalyzes the 2-thiolation of uridine at the wobble position (U34) of tRNA, leading to the formation of s(2)U34. The sequence is that of tRNA-specific 2-thiouridylase MnmA from Mesomycoplasma hyopneumoniae (strain 232) (Mycoplasma hyopneumoniae).